A 761-amino-acid chain; its full sequence is Nitrogen fixation protein FixI (761 aa).

Over 1-120 (MSCCTMDAES…SAPESDKTRN (120 aa)) the chain is Cytoplasmic. The HMA domain occupies 36–106 (RQLDLSVSDV…EINSAGYRAH (71 aa)). The a metal cation site is built by C47 and C50. The chain crosses the membrane as a helical span at residues 121 to 142 (QLLLAIGVSGFAAPNIMLLSVS). Over 143–155 (VWSGADAATRDMF) the chain is Extracellular. The helical transmembrane segment at 156-177 (HWISAMIAAPALVYAGRFFFKS) threads the bilayer. At 178-184 (AWNALRH) the chain is on the cytoplasmic side. Residues 185-205 (GRTNMDVPISVTVSLSYAVSL) traverse the membrane as a helical segment. Residues 206-217 (WETVHHGEHAWF) lie on the Extracellular side of the membrane. The chain crosses the membrane as a helical span at residues 218-238 (DASVSLLFFLLIGRTLDHIMR). The Cytoplasmic segment spans residues 239–367 (EKARAAINGL…RARYRRIADR (129 aa)). The helical transmembrane segment at 368 to 390 (AATLYSPVVHLLALVSFLAWGFL) threads the bilayer. Over 391–395 (GGDWK) the chain is Extracellular. A helical membrane pass occupies residues 396 to 415 (QAMLVAVAVLIITCPCALGL). Topologically, residues 416 to 691 (AVPVVQVVAA…AVARRSASLI (276 aa)) are cytoplasmic. Residue D453 is the 4-aspartylphosphate intermediate of the active site. 2 residues coordinate Mg(2+): D637 and D641. The chain crosses the membrane as a helical span at residues 692 to 711 (RQNFALAIGYNVLAVPIAIA). Residues 712–716 (GLATP) lie on the Extracellular side of the membrane. Residues 717–735 (LIAAVAMSTSSIIVVTNAL) form a helical membrane-spanning segment. At 736–761 (RLNGFGKRPDMHIRRGIGRSAEVKAA) the chain is on the cytoplasmic side.

This sequence belongs to the cation transport ATPase (P-type) (TC 3.A.3) family. Type IB subfamily.

It localises to the cell membrane. It catalyses the reaction ATP + H2O = ADP + phosphate + H(+). FixI is a pump of a specific cation involved in symbiotic nitrogen fixation. The four proteins FixG, FixH, FixI, and FixS may participate in a membrane-bound complex coupling the FixI cation pump with a redox process catalyzed by FixG. In Rhizobium leguminosarum bv. viciae, this protein is Nitrogen fixation protein FixI (fixI).